A 100-amino-acid polypeptide reads, in one-letter code: Aspartyl/glutamyl-tRNA(Asn/Gln) amidotransferase subunit C (100 aa).

It belongs to the GatC family. In terms of assembly, heterotrimer of A, B and C subunits.

It carries out the reaction L-glutamyl-tRNA(Gln) + L-glutamine + ATP + H2O = L-glutaminyl-tRNA(Gln) + L-glutamate + ADP + phosphate + H(+). The catalysed reaction is L-aspartyl-tRNA(Asn) + L-glutamine + ATP + H2O = L-asparaginyl-tRNA(Asn) + L-glutamate + ADP + phosphate + 2 H(+). Allows the formation of correctly charged Asn-tRNA(Asn) or Gln-tRNA(Gln) through the transamidation of misacylated Asp-tRNA(Asn) or Glu-tRNA(Gln) in organisms which lack either or both of asparaginyl-tRNA or glutaminyl-tRNA synthetases. The reaction takes place in the presence of glutamine and ATP through an activated phospho-Asp-tRNA(Asn) or phospho-Glu-tRNA(Gln). The sequence is that of Aspartyl/glutamyl-tRNA(Asn/Gln) amidotransferase subunit C from Streptococcus suis (strain 98HAH33).